A 115-amino-acid chain; its full sequence is Holo-[acyl-carrier-protein] synthase (115 aa).

The Mg(2+) site is built by Asp-6 and Glu-51.

Belongs to the P-Pant transferase superfamily. AcpS family. Mg(2+) is required as a cofactor.

Its subcellular location is the cytoplasm. The catalysed reaction is apo-[ACP] + CoA = holo-[ACP] + adenosine 3',5'-bisphosphate + H(+). Transfers the 4'-phosphopantetheine moiety from coenzyme A to a Ser of acyl-carrier-protein. The chain is Holo-[acyl-carrier-protein] synthase from Campylobacter jejuni (strain RM1221).